We begin with the raw amino-acid sequence, 551 residues long: MSEMQGNKIVVDPITRIEGHLRIEVEVEGGKIKNAWSMSTLFRGLEMILKGRDPRDAQHFTQRACGVCTYVHALASVRAVDNCVGVKIPENATLMRNLTMGAQYMHDHLVHFYHLHALDWVNVANALNADPAKAARLANDLSPRKTTTESLKAVQAKVKALVESGQLGIFTNAYFLGGHPAYVLPAEVDLIATAHYLEALRVQVKAARAMAIFGAKNPHTQFTVVGGCTNYDSLRPERIAEFRKLYKEVREFIEQVYITDLLAVAGFYKNWAGIGKTSNFLTCGEFPTDEYDLNSRYTPQGVIWGNDLSKVDDFNPDLIEEHVKYSWYEGADAHHPYKGVTKPKWTEFHGEDRYSWMKAPRYKGEAFEVGPLASVLVAYAKKHEPTVKAVDLVLKTLGVGPEALFSTLGRTAARGIQCLTAAQEVEVWLDKLEANVKAGKDDLYTDWQYPTESQGVGFVNAPRGMLSHWIVQRGGKIENFQHVVPSTWNLGPRCAERKLSAVEQALIGTPIADPKRPVEILRTVHSYDPCIACGVHVIDPESNQVHKFRIL.

Positions 65, 68, 530, and 533 each coordinate Ni(2+). The propeptide occupies 537-551 (VIDPESNQVHKFRIL).

The protein belongs to the [NiFe]/[NiFeSe] hydrogenase large subunit family. In terms of assembly, heterodimer of a large and a small subunit. Ni(2+) is required as a cofactor.

The protein resides in the periplasm. The catalysed reaction is 2 Fe(III)-[cytochrome c3] + H2 = 2 Fe(II)-[cytochrome c3] + 2 H(+). The protein is Periplasmic [NiFe] hydrogenase large subunit (hydB) of Megalodesulfovibrio gigas (Desulfovibrio gigas).